We begin with the raw amino-acid sequence, 273 residues long: Transmembrane protein 45A (273 aa).

5 helical membrane passes run 8–27, 55–79, 108–131, 153–171, and 217–236; these read ALPG…KNIL, VVVL…ALIL, IICF…AIFV, LLVF…EFLV, and MFLS…LIGV.

Belongs to the TMEM45 family.

Its subcellular location is the membrane. This is Transmembrane protein 45A (Tmem45a) from Mus musculus (Mouse).